We begin with the raw amino-acid sequence, 269 residues long: GRF-interacting factor 10 (269 aa).

Residues 1–71 (MTAEGEAKNP…GEKDDGACRD (71 aa)) form a disordered region. Low complexity predominate over residues 22–43 (QQAAPAPAPAQGEVAQEAAVQG). Over residues 47–69 (EQERDKADREVQGGAGEKDDGAC) the composition is skewed to basic and acidic residues. The QLQ domain occupies 113 to 148 (AFTAMQLQELEQQSRVYQYMAARVPVPTHLVFPVWK). The region spanning 179–223 (EPEPGRCRRTDGKKWRCWRNTIPNEKYCERHMHRGRKRPVQVFLE) is the WRC domain. 2 consecutive short sequence motifs (bipartite nuclear localization signal) follow at residues 184–194 (RCRRTDGKKWR) and 212–216 (RGRKR). Positions 217 to 269 (PVQVFLEDDEPDSASGSKPAAPGKATEGAKKADDKSPSSKKLAVAAPAAVQST) are disordered. A compositionally biased stretch (basic and acidic residues) spans 243 to 253 (EGAKKADDKSP).

The protein belongs to the GRF family. As to quaternary structure, interacts with GIF1. In terms of tissue distribution, highly expressed in shoots. Expressed in developing leaves.

The protein resides in the nucleus. Functionally, involved in the regulation of cell proliferation in developing shoots and leaves. Does not possess transactivation activity. This Zea mays (Maize) protein is GRF-interacting factor 10.